A 591-amino-acid polypeptide reads, in one-letter code: Probable translation initiation factor IF-2 (591 aa).

A tr-type G domain is found at 6–220 (IRTPIVCVMG…IMIGLAQRYM (215 aa)). The G1 stretch occupies residues 15–22 (GHVDHGKT). A GTP-binding site is contributed by 15–22 (GHVDHGKT). The tract at residues 40–44 (AITQH) is G2. The interval 76-79 (DTPG) is G3. GTP-binding positions include 76–80 (DTPGH) and 130–133 (TKVD). The interval 130–133 (TKVD) is G4. The interval 198 to 200 (SAH) is G5.

Belongs to the TRAFAC class translation factor GTPase superfamily. Classic translation factor GTPase family. IF-2 subfamily.

Functionally, function in general translation initiation by promoting the binding of the formylmethionine-tRNA to ribosomes. Seems to function along with eIF-2. This Methanoregula boonei (strain DSM 21154 / JCM 14090 / 6A8) protein is Probable translation initiation factor IF-2.